We begin with the raw amino-acid sequence, 165 residues long: CDP-archaeol synthase (165 aa).

Helical transmembrane passes span 41–61 (GLIC…WLVG), 72–92 (ILSV…KSFI), 103–123 (AWPV…TIIF), and 127–147 (WFFA…TPVL).

The protein belongs to the CDP-archaeol synthase family. Requires Mg(2+) as cofactor.

The protein resides in the cell membrane. The enzyme catalyses 2,3-bis-O-(geranylgeranyl)-sn-glycerol 1-phosphate + CTP + H(+) = CDP-2,3-bis-O-(geranylgeranyl)-sn-glycerol + diphosphate. The protein operates within membrane lipid metabolism; glycerophospholipid metabolism. In terms of biological role, catalyzes the formation of CDP-2,3-bis-(O-geranylgeranyl)-sn-glycerol (CDP-archaeol) from 2,3-bis-(O-geranylgeranyl)-sn-glycerol 1-phosphate (DGGGP) and CTP. This reaction is the third ether-bond-formation step in the biosynthesis of archaeal membrane lipids. In Methanoregula boonei (strain DSM 21154 / JCM 14090 / 6A8), this protein is CDP-archaeol synthase.